A 3515-amino-acid polypeptide reads, in one-letter code: MGKPLSRPDCLRRNPSCLGKGEEEDGYIEDCYVPQRSIYDTMRINEQIDQGSKLNQTSKSTMEKMEGSTISSNGTLGAASNVFESRAPEGKKLDERIIFDALKLSSDVQKSAPVPPRRRPNAERKDNVNRRSWKSFMPPNFPEFAERIEASLSEVSEAGASNPSLQEKKESSSALTESSGHLDHREPQSESVTLEHVSKSIGIPEVQDFKNLSGDCQDFRFQQHSANPPHEFQPVESEAVATSGNTDVMQESRFSSATWPRATKSLAKGGFSEKQHPLGDTACTVEMPPLSPCLSEELLDPELHVLITPSLREKTESELKFEEDERWIMMEAEGEWEEEKLSDREKTFLMADEKNSLADIFEEREQANTAVVEDGSDCLAAVLRTFGHLSLGQICCPDDPQPAKDQLATVPKDIPLDCDCVLTGEDILGEVANRTAQGLEGLVSDSACTVGTIDAEQLSDTDSVQMFLELEKECLCEEGVTPLVELQNQISSEGLAASQDAENLLVISHFSGAALEKEQHLGLLHVRAKDYDTRLDCGYFNTLDSSQVPNAVELIAHVDIMRDTSTVSKEECEKVPFSPRTAEFKSRQPADLDSLEKLDPGGLLNSDHRVSHEEKLSGFIASELAKDNGSLSQGDCSQTEGNGEECIERVTFSFAFNHELTDVTSGPEVEVLYESNLLTDEIHLESGNVTVNQENNSLTSMGNVVTCELSVEKVCDEDGEAKELDYQATLLEDQAPAHFHRNFPEQVFQDLQRKSPESEILSLHLLVEELRLNPDGVETVNDTKPELNVASSEGGEMERRDSDSFLNIFPEKQVTKAGNTEPVLEEWIPVLQRPSRTAAVPTVKDALDAALPSPEEGTSIAAVPAPEGTAVVAALVPFPHEDILVASIVSLEEEDVTAAAVSAPERATVPAVTVSVPEGTAAVAAVSSPEETAPAVAAAITQEGMSAVAGFSPEWAALAITVPITEEDGTPEGPVTPATTVHAPEEPDTAAVRVSTPEEPASPAAAVPTPEEPTSPAAAVPTPEEPTSPAAAVPPPEEPTSPAAAVPTPEEPTSPAAAVPTPEEPTSPAAAVPTPEEPTSPAAAVPTPEEPTSPAAAVPTPEEPTSPAAAVPTPEEPASPAAAVPTPEEPASPAAAVPTPEEPAFPAPAVPTPEESASAAVAVPTPEESASPAAAVPTPAESASFAAVVATLEEPTSPAASVPTPAAMVATLEEFTSPAASVPTSEEPASLAAAVSNPEEPTSPAAAVPTLEEPTSSAAAVLTPEELSSPAASVPTPEEPASPAAAVSNLEEPASPAAAVPTPEVAAIPAASVPTPEVPAIPAAAVPPMEEVSPIGVPFLGVSAHTDSVPISEEGTPVLEEASSTGMWIKEDLDSLVFGIKEVTSTVLHGKVPLAATAGLNSDEMFQKEQVDPLQMKLQQVNGLGQGLIQSAGKDCDVQGLEHDMEEINARWNTLNKKVAQRIAQLQEALLHCGKFQDALEPLLSWLADTEELIANQKPPSAEYKVVKAQIQEQKLLQRLLDDRKATVDMLQAEGGRIAQSAELADREKITGQLESLESRWTELLSKAAARQKQLEDILVLAKQFHETAEPISDFLSVTEKKLANSEPVGTQTAKIQQQIIRHKALNEEIVNRKKNVDQAIKNGQALLKQTTGEEVLLIQEKLDGIKTRYADITVTSSKALRTLEQARQLATKFQSTYEELTGWLREVEEELATSGGQSPTGEQIPQFQQRQKELKKEVMEHRLVLDTVNEVSRALLELVPWRAREGLDKLVSDANEQYKLVSDTIGQRVDEIDAAIQRSQQYEQAADAELAWVAETKRKLMALGPIRLEQDQTTAQLQVQKAFSIDIIRHKDSMDELFSHRSEIFGTCGEEQKTVLQEKTESLIQQYEAISLLNSERYARLERAQVLVNQFWETYEELSPWIEETRALIAQLPSPAIDHEQLRQQQEEMRQLRESIAEHKPHIDKLLKIGPQLKELNPEEGEMVEEKYQKAENMYAQIKEEVRQRALALDEAVSQSTQITEFHDKIEPMLETLENLSSRLRMPPLIPAEVDKIRECISDNKSATVELEKLQPSFEALKRRGEELIGRSQGADKDLAAKEIQDKLDQMVFFWEDIKARAEEREIKFLDVLELAEKFWYDMAALLTTIKDTQDIVHDLESPGIDPSIIKQQVEAAETIKEETDGLHEELEFIRILGADLIFACGETEKPEVRKSIDEMNNAWENLNKTWKERLEKLEDAMQAAVQYQDTLQAMFDWLDNTVIKLCTMPPVGTDLNTVKDQLNEMKEFKVEVYQQQIEMEKLNHQGELMLKKATDETDRDIIREPLTELKHLWENLGEKIAHRQHKLEGALLALGQFQHALEELMSWLTHTEELLDAQRPISGDPKVIEVELAKHHVLKNDVLAHQATVETVNKAGNELLESSAGDDASSLRSRLEAMNQCWESVLQKTEEREQQLQSTLQQAQGFHSEIEDFLLELTRMESQLSASKPTGGLPETAREQLDTHMELYSQLKAKEETYNQLLDKGRLMLLSRDDSGSGSKTEQSVALLEQKWHVVSSKMEERKSKLEEALNLATEFQNSLQEFINWLTLAEQSLNIASPPSLILNTVLSQIEEHKVFANEVNAHRDQIIELDQTGNQLKFLSQKQDVVLIKNLLVSVQSRWEKVVQRSIERGRSLDDARKRAKQFHEAWKKLIDWLEDAESHLDSELEISNDPDKIKLQLSKHKEFQKTLGGKQPVYDTTIRTGRALKEKTLLPEDSQKLDNFLGEVRDKWDTVCGKSVERQHKLEEALLFSGQFMDALQALVDWLYKVEPQLAEDQPVHGDLDLVMNLMDAHKVFQKELGKRTGTVQVLKRSGRELIENSRDDTTWVKGQLQELSTRWDTVCKLSVSKQSRLEQALKQAEVFRDTVHMLLEWLSEAEQTLRFRGALPDDTEALQSLIDTHKEFMKKVEEKRVDVNSAVAMGEVILAVCHPDCITTIKHWITIIRARFEEVLTWAKQHQQRLETALSELVANAELLEELLAWIQWAETTLIQRDQEPIPQNIDRVKALIAEHQTFMEEMTRKQPDVDRVTKTYKRKNIEPTHAPFIEKSRSGGRKSLSQPTPPPMPILSQSEAKNPRINQLSARWQQVWLLALERQRKLNDALDRLEELKEFANFDFDVWRKKYMRWMNHKKSRVMDFFRRIDKDQDGKITRQEFIDGILASKFPTTKLEMTAVADIFDRDGDGYIDYYEFVAALHPNKDAYRPTTDADKIEDEVTRQVAQCKCAKRFQVEQIGENKYRFGDSQQLRLVRILRSTVMVRVGGGWMALDEFLVKNDPCRARGRTNIELREKFILPEGASQGMTPFRSRGRRSKPSSRAASPTRSSSSASQSNHSCTSMPSSPATPASGTKVIPSSGSKLKRPTPTFHSSRTSLAGDTSNSSSPASTGAKTNRADPKKSASRPGSRAGSRAGSRASSRRGSDASDFDLLETQSACSDTSESSAAGGQGNSRRGLNKPSKIPTMSKKTTTASPRTPGPKR.

7 disordered regions span residues 1–23 (MGKP…KGEE), 108–136 (VQKS…WKSF), 155–196 (VSEA…TLEH), 965–1178 (TEED…AVPT), 1217–1298 (SPAA…SPAA), 1710–1730 (EELA…QFQQ), and 3078–3108 (PTHA…ILSQ). Over residues 120-129 (PNAERKDNVN) the composition is skewed to basic and acidic residues. Residues 157–245 (EAGASNPSLQ…ESEAVATSGN (89 aa)) are 13 X 13 AA approximate tandem repeat of P-T-S-P-A-A-A-V-P-T-P-E-E. Low complexity-rich tracts occupy residues 995-1031 (STPE…SPAA) and 1040-1139 (TSPA…AVPT). Repeat copies occupy residues 1012–1024 (EPTS…PTPE), 1026–1037 (PTSPAAAVPPPE), 1038–1051 (EPTS…TPEE), 1052–1064 (PTSP…TPEE), 1065–1077 (PTSP…TPEE), 1078–1090 (PTSP…TPEE), 1091–1103 (PTSP…TPEE), 1104–1116 (PTSP…TPEE), 1117–1129 (PASP…TPEE), 1130–1142 (PASP…TPEE), 1143–1155 (PAFP…TPEE), 1156–1168 (SASA…TPEE), and 1169–1178 (SASPAAAVPT). Residues 1140-1151 (PEEPAFPAPAVP) show a composition bias toward pro residues. Composition is skewed to low complexity over residues 1162-1178 (AVPT…AVPT) and 1268-1298 (SSPA…SPAA). A compositionally biased stretch (polar residues) spans 1715–1730 (SGGQSPTGEQIPQFQQ). EF-hand domains lie at 3168–3203 (HKKS…SKFP) and 3204–3239 (TTKL…NKDA). Positions 3181, 3183, 3185, 3187, 3192, 3217, 3219, 3221, 3223, and 3228 each coordinate Ca(2+). The GAR domain maps to 3244–3316 (TDADKIEDEV…EFLVKNDPCR (73 aa)). Residues 3332–3515 (PEGASQGMTP…ASPRTPGPKR (184 aa)) are disordered. Residues 3352–3386 (SSRAASPTRSSSSASQSNHSCTSMPSSPATPASGT) show a composition bias toward low complexity. Residues 3402-3426 (TFHSSRTSLAGDTSNSSSPASTGAK) show a composition bias toward polar residues. The segment covering 3437-3451 (SRPGSRAGSRAGSRA) has biased composition (low complexity). A compositionally biased stretch (polar residues) spans 3466–3488 (ETQSACSDTSESSAAGGQGNSRR).

The protein localises to the cytoplasm. It is found in the cytoskeleton. In Homo sapiens (Human), this protein is Microtubule-actin cross-linking factor 1, isoforms 6/7.